We begin with the raw amino-acid sequence, 248 residues long: Pyridoxine 5'-phosphate synthase (248 aa).

Asparagine 9 lines the 3-amino-2-oxopropyl phosphate pocket. 11–12 provides a ligand contact to 1-deoxy-D-xylulose 5-phosphate; that stretch reads DH. Arginine 20 contributes to the 3-amino-2-oxopropyl phosphate binding site. Histidine 45 (proton acceptor) is an active-site residue. 1-deoxy-D-xylulose 5-phosphate-binding residues include arginine 47 and histidine 52. Residue glutamate 72 is the Proton acceptor of the active site. Threonine 102 serves as a coordination point for 1-deoxy-D-xylulose 5-phosphate. Histidine 193 acts as the Proton donor in catalysis. 3-amino-2-oxopropyl phosphate contacts are provided by residues glycine 194 and 215-216; that span reads GH.

It belongs to the PNP synthase family. As to quaternary structure, homooctamer; tetramer of dimers.

The protein resides in the cytoplasm. It carries out the reaction 3-amino-2-oxopropyl phosphate + 1-deoxy-D-xylulose 5-phosphate = pyridoxine 5'-phosphate + phosphate + 2 H2O + H(+). It participates in cofactor biosynthesis; pyridoxine 5'-phosphate biosynthesis; pyridoxine 5'-phosphate from D-erythrose 4-phosphate: step 5/5. Its function is as follows. Catalyzes the complicated ring closure reaction between the two acyclic compounds 1-deoxy-D-xylulose-5-phosphate (DXP) and 3-amino-2-oxopropyl phosphate (1-amino-acetone-3-phosphate or AAP) to form pyridoxine 5'-phosphate (PNP) and inorganic phosphate. This is Pyridoxine 5'-phosphate synthase from Hydrogenovibrio crunogenus (strain DSM 25203 / XCL-2) (Thiomicrospira crunogena).